Reading from the N-terminus, the 176-residue chain is Peptide deformylase (176 aa).

Residues C92 and H134 each coordinate Fe cation. Residue E135 is part of the active site. H138 lines the Fe cation pocket.

Belongs to the polypeptide deformylase family. The cofactor is Fe(2+).

The enzyme catalyses N-terminal N-formyl-L-methionyl-[peptide] + H2O = N-terminal L-methionyl-[peptide] + formate. Its function is as follows. Removes the formyl group from the N-terminal Met of newly synthesized proteins. Requires at least a dipeptide for an efficient rate of reaction. N-terminal L-methionine is a prerequisite for activity but the enzyme has broad specificity at other positions. This Acinetobacter baumannii (strain SDF) protein is Peptide deformylase.